A 362-amino-acid polypeptide reads, in one-letter code: MAKVVDCVLLLAFIAVVRGQEACRTPDHRDGVCHPVQQCPSVRDEFFNSDRVLSEDEIDYLRKLQCKTKDVTICCPDGVTTVDRNPTAVRDGLPNPKAFECGLDTLADRIIGGNYTAIDEFPWYALLEYQSKKGERAFKCGGSLINGRYVLTAAHCLANKKLDEGERLVNVRLGEYNTATDTDCADGNPDDCADPPQNFGIEAQIVHPGYDKNGPYQHHDIALIRLDRDVTMNNFVSPVCLPPDDFPPTSPGLNVTAVGFGHTGRQRHSGIKKKAQFPVFAQEECDKKWKNIEVIGEQLCAGGVFGIDSCSGDSGGPLMVKRFYWIQEGVISFGNQCALEGWPGVYTRVSSYLDWIRQNIRR.

A signal peptide spans 1-19 (MAKVVDCVLLLAFIAVVRG). Residues 22–75 (ACRTPDHRDGVCHPVQQCPSVRDEFFNSDRVLSEDEIDYLRKLQCKTKDVTICC) form the Clip domain. Intrachain disulfides connect Cys-23-Cys-74, Cys-33-Cys-66, and Cys-39-Cys-75. The region spanning 110–361 (IIGGNYTAID…YLDWIRQNIR (252 aa)) is the Peptidase S1 domain. N-linked (GlcNAc...) asparagine glycosylation occurs at Asn-114. An intrachain disulfide couples Cys-140 to Cys-156. Active-site charge relay system residues include His-155 and Asp-220. An N-linked (GlcNAc...) asparagine glycan is attached at Asn-254. 2 disulfides stabilise this stretch: Cys-285–Cys-300 and Cys-310–Cys-337. Ser-314 serves as the catalytic Charge relay system.

This sequence belongs to the peptidase S1 family. CLIP subfamily. As to quaternary structure, forms a covalent heterodimer with SRPN2; the interaction inhibits CLIPB10 catalytic activity. Post-translationally, cleaved by an unknown protease into an active form.

It is found in the secreted. Its activity is regulated as follows. Inhibited by serpin SRPN2. Serine protease which preferentially cleaves after arginine residues. Involved in the innate immune response against parasite P.bergei infection by activating the melanization cascade. Probably in the hemolymph, cleaves and activates prophenoloxidase (PPO), which functions in the formation of pigments such as melanin and other polyphenolic compounds. In the susceptible strain G3, appears to be dispensable for ookinete elimination which occurs by lysis. The polypeptide is CLIP domain-containing serine protease B10 (Anopheles gambiae (African malaria mosquito)).